Here is a 347-residue protein sequence, read N- to C-terminus: Holliday junction branch migration complex subunit RuvB (347 aa).

Residues 1–183 (MTDVPRMVTP…FGIPVRLNFY (183 aa)) are large ATPase domain (RuvB-L). Residues leucine 22, arginine 23, glycine 64, lysine 67, threonine 68, threonine 69, 130–132 (EDF), arginine 173, tyrosine 183, and arginine 220 each bind ATP. A Mg(2+)-binding site is contributed by threonine 68. The segment at 184–254 (TVDELEKIVS…IADHALGALE (71 aa)) is small ATPAse domain (RuvB-S). The tract at residues 257–347 (AAGLDAMDRR…QFGLFGGEDE (91 aa)) is head domain (RuvB-H). The DNA site is built by arginine 293, arginine 312, and arginine 317.

Belongs to the RuvB family. As to quaternary structure, homohexamer. Forms an RuvA(8)-RuvB(12)-Holliday junction (HJ) complex. HJ DNA is sandwiched between 2 RuvA tetramers; dsDNA enters through RuvA and exits via RuvB. An RuvB hexamer assembles on each DNA strand where it exits the tetramer. Each RuvB hexamer is contacted by two RuvA subunits (via domain III) on 2 adjacent RuvB subunits; this complex drives branch migration. In the full resolvosome a probable DNA-RuvA(4)-RuvB(12)-RuvC(2) complex forms which resolves the HJ.

Its subcellular location is the cytoplasm. It catalyses the reaction ATP + H2O = ADP + phosphate + H(+). Functionally, the RuvA-RuvB-RuvC complex processes Holliday junction (HJ) DNA during genetic recombination and DNA repair, while the RuvA-RuvB complex plays an important role in the rescue of blocked DNA replication forks via replication fork reversal (RFR). RuvA specifically binds to HJ cruciform DNA, conferring on it an open structure. The RuvB hexamer acts as an ATP-dependent pump, pulling dsDNA into and through the RuvAB complex. RuvB forms 2 homohexamers on either side of HJ DNA bound by 1 or 2 RuvA tetramers; 4 subunits per hexamer contact DNA at a time. Coordinated motions by a converter formed by DNA-disengaged RuvB subunits stimulates ATP hydrolysis and nucleotide exchange. Immobilization of the converter enables RuvB to convert the ATP-contained energy into a lever motion, pulling 2 nucleotides of DNA out of the RuvA tetramer per ATP hydrolyzed, thus driving DNA branch migration. The RuvB motors rotate together with the DNA substrate, which together with the progressing nucleotide cycle form the mechanistic basis for DNA recombination by continuous HJ branch migration. Branch migration allows RuvC to scan DNA until it finds its consensus sequence, where it cleaves and resolves cruciform DNA. This Nitrobacter hamburgensis (strain DSM 10229 / NCIMB 13809 / X14) protein is Holliday junction branch migration complex subunit RuvB.